The primary structure comprises 464 residues: UDP-N-acetylmuramoyl-tripeptide--D-alanyl-D-alanine ligase (464 aa).

125-131 (GSNGKTT) serves as a coordination point for ATP.

It belongs to the MurCDEF family. MurF subfamily.

Its subcellular location is the cytoplasm. It carries out the reaction D-alanyl-D-alanine + UDP-N-acetyl-alpha-D-muramoyl-L-alanyl-gamma-D-glutamyl-meso-2,6-diaminopimelate + ATP = UDP-N-acetyl-alpha-D-muramoyl-L-alanyl-gamma-D-glutamyl-meso-2,6-diaminopimeloyl-D-alanyl-D-alanine + ADP + phosphate + H(+). It participates in cell wall biogenesis; peptidoglycan biosynthesis. Its function is as follows. Involved in cell wall formation. Catalyzes the final step in the synthesis of UDP-N-acetylmuramoyl-pentapeptide, the precursor of murein. In Borreliella burgdorferi (strain ATCC 35210 / DSM 4680 / CIP 102532 / B31) (Borrelia burgdorferi), this protein is UDP-N-acetylmuramoyl-tripeptide--D-alanyl-D-alanine ligase.